The sequence spans 350 residues: Uroporphyrinogen decarboxylase (350 aa).

Substrate is bound by residues Arg27 to Arg31, Phe46, Asp76, Tyr152, Ser207, and His321.

It belongs to the uroporphyrinogen decarboxylase family. As to quaternary structure, homodimer.

It localises to the cytoplasm. The enzyme catalyses uroporphyrinogen III + 4 H(+) = coproporphyrinogen III + 4 CO2. Its pathway is porphyrin-containing compound metabolism; protoporphyrin-IX biosynthesis; coproporphyrinogen-III from 5-aminolevulinate: step 4/4. Its function is as follows. Catalyzes the decarboxylation of four acetate groups of uroporphyrinogen-III to yield coproporphyrinogen-III. This Listeria monocytogenes serotype 4a (strain HCC23) protein is Uroporphyrinogen decarboxylase.